Reading from the N-terminus, the 452-residue chain is Adenosylmethionine-8-amino-7-oxononanoate aminotransferase (452 aa).

116–117 (GS) contributes to the pyridoxal 5'-phosphate binding site. Residue Tyr-152 participates in substrate binding. Asp-257 lines the pyridoxal 5'-phosphate pocket. The substrate site is built by Lys-286, Gly-321, and Arg-414. Lys-286 carries the post-translational modification N6-(pyridoxal phosphate)lysine.

The protein belongs to the class-III pyridoxal-phosphate-dependent aminotransferase family. BioA subfamily. Homodimer. Pyridoxal 5'-phosphate serves as cofactor.

The protein resides in the cytoplasm. It carries out the reaction (8S)-8-amino-7-oxononanoate + S-adenosyl-L-methionine = S-adenosyl-4-methylsulfanyl-2-oxobutanoate + (7R,8S)-7,8-diammoniononanoate. It functions in the pathway cofactor biosynthesis; biotin biosynthesis; 7,8-diaminononanoate from 8-amino-7-oxononanoate (SAM route): step 1/1. In terms of biological role, catalyzes the transfer of the alpha-amino group from S-adenosyl-L-methionine (SAM) to 7-keto-8-aminopelargonic acid (KAPA) to form 7,8-diaminopelargonic acid (DAPA). It is the only aminotransferase known to utilize SAM as an amino donor. The polypeptide is Adenosylmethionine-8-amino-7-oxononanoate aminotransferase (Staphylococcus aureus (strain NCTC 8325 / PS 47)).